A 168-amino-acid polypeptide reads, in one-letter code: Photosystem I assembly protein Ycf3 (168 aa).

3 TPR repeats span residues Ala35 to Pro68, Ser72 to Leu105, and Gly120 to Asn153.

This sequence belongs to the Ycf3 family.

The protein resides in the plastid. The protein localises to the chloroplast thylakoid membrane. Essential for the assembly of the photosystem I (PSI) complex. May act as a chaperone-like factor to guide the assembly of the PSI subunits. The sequence is that of Photosystem I assembly protein Ycf3 from Solanum bulbocastanum (Wild potato).